A 450-amino-acid polypeptide reads, in one-letter code: tRNA-2-methylthio-N(6)-dimethylallyladenosine synthase (450 aa).

The MTTase N-terminal domain maps to K3–R118. Positions 12, 49, 81, 155, 159, and 162 each coordinate [4Fe-4S] cluster. Residues S141–S376 enclose the Radical SAM core domain. The 64-residue stretch at A377–A440 folds into the TRAM domain.

Belongs to the methylthiotransferase family. MiaB subfamily. As to quaternary structure, monomer. [4Fe-4S] cluster is required as a cofactor.

Its subcellular location is the cytoplasm. It catalyses the reaction N(6)-dimethylallyladenosine(37) in tRNA + (sulfur carrier)-SH + AH2 + 2 S-adenosyl-L-methionine = 2-methylsulfanyl-N(6)-dimethylallyladenosine(37) in tRNA + (sulfur carrier)-H + 5'-deoxyadenosine + L-methionine + A + S-adenosyl-L-homocysteine + 2 H(+). In terms of biological role, catalyzes the methylthiolation of N6-(dimethylallyl)adenosine (i(6)A), leading to the formation of 2-methylthio-N6-(dimethylallyl)adenosine (ms(2)i(6)A) at position 37 in tRNAs that read codons beginning with uridine. This chain is tRNA-2-methylthio-N(6)-dimethylallyladenosine synthase, found in Verminephrobacter eiseniae (strain EF01-2).